A 185-amino-acid chain; its full sequence is Ribosome-recycling factor (185 aa).

This sequence belongs to the RRF family.

It localises to the cytoplasm. Functionally, responsible for the release of ribosomes from messenger RNA at the termination of protein biosynthesis. May increase the efficiency of translation by recycling ribosomes from one round of translation to another. This Histophilus somni (strain 2336) (Haemophilus somnus) protein is Ribosome-recycling factor.